Reading from the N-terminus, the 241-residue chain is Ribonuclease PH (241 aa).

Phosphate-binding positions include Arg87 and 125-127; that span reads GTR.

The protein belongs to the RNase PH family. In terms of assembly, homohexameric ring arranged as a trimer of dimers.

The enzyme catalyses tRNA(n+1) + phosphate = tRNA(n) + a ribonucleoside 5'-diphosphate. Functionally, phosphorolytic 3'-5' exoribonuclease that plays an important role in tRNA 3'-end maturation. Removes nucleotide residues following the 3'-CCA terminus of tRNAs; can also add nucleotides to the ends of RNA molecules by using nucleoside diphosphates as substrates, but this may not be physiologically important. Probably plays a role in initiation of 16S rRNA degradation (leading to ribosome degradation) during starvation. This chain is Ribonuclease PH, found in Dehalococcoides mccartyi (strain ATCC BAA-2100 / JCM 16839 / KCTC 5957 / BAV1).